A 103-amino-acid polypeptide reads, in one-letter code: Integration host factor subunit alpha (103 aa).

It belongs to the bacterial histone-like protein family. As to quaternary structure, heterodimer of an alpha and a beta chain.

Its function is as follows. This protein is one of the two subunits of integration host factor, a specific DNA-binding protein that functions in genetic recombination as well as in transcriptional and translational control. The chain is Integration host factor subunit alpha from Bartonella bacilliformis (strain ATCC 35685 / KC583 / Herrer 020/F12,63).